Here is a 367-residue protein sequence, read N- to C-terminus: tRNA uridine(34) hydroxylase (367 aa).

Residues 159-249 (EDKNSIVVDV…GIISYAHEIS (91 aa)) enclose the Rhodanese domain. Cysteine 213 (cysteine persulfide intermediate) is an active-site residue.

The protein belongs to the TrhO family.

The enzyme catalyses uridine(34) in tRNA + AH2 + O2 = 5-hydroxyuridine(34) in tRNA + A + H2O. Catalyzes oxygen-dependent 5-hydroxyuridine (ho5U) modification at position 34 in tRNAs. This chain is tRNA uridine(34) hydroxylase, found in Leptospira borgpetersenii serovar Hardjo-bovis (strain L550).